We begin with the raw amino-acid sequence, 155 residues long: Small ribosomal subunit protein uS7c (155 aa).

Belongs to the universal ribosomal protein uS7 family. As to quaternary structure, part of the 30S ribosomal subunit.

The protein localises to the plastid. It is found in the chloroplast. Its function is as follows. One of the primary rRNA binding proteins, it binds directly to 16S rRNA where it nucleates assembly of the head domain of the 30S subunit. This is Small ribosomal subunit protein uS7c (rps7) from Butomus umbellatus (Flowering rush).